Reading from the N-terminus, the 370-residue chain is tRNA/tmRNA (uracil-C(5))-methyltransferase (370 aa).

Residues glutamine 195, tyrosine 221, asparagine 226, glutamate 242, and aspartate 302 each contribute to the S-adenosyl-L-methionine site. Cysteine 327 acts as the Nucleophile in catalysis. The Proton acceptor role is filled by glutamate 361.

Belongs to the class I-like SAM-binding methyltransferase superfamily. RNA M5U methyltransferase family. TrmA subfamily.

It carries out the reaction uridine(54) in tRNA + S-adenosyl-L-methionine = 5-methyluridine(54) in tRNA + S-adenosyl-L-homocysteine + H(+). The catalysed reaction is uridine(341) in tmRNA + S-adenosyl-L-methionine = 5-methyluridine(341) in tmRNA + S-adenosyl-L-homocysteine + H(+). Dual-specificity methyltransferase that catalyzes the formation of 5-methyluridine at position 54 (m5U54) in all tRNAs, and that of position 341 (m5U341) in tmRNA (transfer-mRNA). This Wolinella succinogenes (strain ATCC 29543 / DSM 1740 / CCUG 13145 / JCM 31913 / LMG 7466 / NCTC 11488 / FDC 602W) (Vibrio succinogenes) protein is tRNA/tmRNA (uracil-C(5))-methyltransferase.